A 174-amino-acid polypeptide reads, in one-letter code: uncharacterized protein (174 aa).

It belongs to the gamma-class carbonic anhydrase family.

This is an uncharacterized protein from Pseudomonas aeruginosa (strain ATCC 15692 / DSM 22644 / CIP 104116 / JCM 14847 / LMG 12228 / 1C / PRS 101 / PAO1).